A 514-amino-acid polypeptide reads, in one-letter code: Na(+)/H(+) antiporter NhaB (514 aa).

The next 11 helical transmembrane spans lie at 21–41 (LAIVVFLIINPIVFFFISPFI), 43–63 (GWLLVAEFIFTLAMALKCYPL), 88–108 (IMANFEVILLLIFMVAGIFFM), 143–163 (FLDALTVVAVIISVAMGFYGV), 203–223 (LMMHAGVGTALGGVMTVVGEP), 239–259 (FFLRMAPVTIPVFICGLLTCF), 304–324 (ALIAIWLILGLAFHLAAVGLI), 349–369 (QESLPFTALLVVFFSVVAVII), 390–410 (LALFYLFNGLLSSISDNVFVA), 448–468 (ATPNGQAAFLFLLTSSISPLI), and 484–504 (IVLSIIGLLAIEFILPAATIW).

This sequence belongs to the NhaB Na(+)/H(+) (TC 2.A.34) antiporter family.

The protein resides in the cell inner membrane. It catalyses the reaction 2 Na(+)(in) + 3 H(+)(out) = 2 Na(+)(out) + 3 H(+)(in). Functionally, na(+)/H(+) antiporter that extrudes sodium in exchange for external protons. In Haemophilus influenzae (strain 86-028NP), this protein is Na(+)/H(+) antiporter NhaB.